Consider the following 1072-residue polypeptide: Vacuolar membrane protease (1072 aa).

Over 1–9 (MINPISFRP) the chain is Cytoplasmic. A helical membrane pass occupies residues 10–30 (GPVTFWTTLIYLALLIPIVII). Over 31-404 (NEKTPAAPKT…SFVLFGLRGM (374 aa)) the chain is Vacuolar. N-linked (GlcNAc...) asparagine glycans are attached at residues Asn48, Asn116, Asn119, and Asn128. Zn(2+) contacts are provided by His185 and Asp197. The Proton acceptor role is filled by Glu231. Zn(2+) contacts are provided by Glu232, Glu257, and His330. Residues 405 to 425 (FAWSLTLLIATPLVLVGITWL) traverse the membrane as a helical segment. Residues 426 to 457 (LRNLDKDYFFTSTVKTKEHPEYEAVPIGGWKG) are Cytoplasmic-facing. The chain crosses the membrane as a helical span at residues 458–478 (FFRFPFALGVAVFFTISSALL). Residues 479–492 (MNKVNPLIVYSSRY) lie on the Vacuolar side of the membrane. Residues 493–513 (SVWVMMVSIFYFSFWMIMRGA) traverse the membrane as a helical segment. At 514-523 (NFVRPSALHR) the chain is on the cytoplasmic side. The chain crosses the membrane as a helical span at residues 524 to 544 (GYANLWLFVFGWIVLVAVTAL). The Vacuolar portion of the chain corresponds to 545 to 554 (EDRRRIAAGY). The chain crosses the membrane as a helical span at residues 555-575 (IFVFLESAIFLSCLISFVELL). At 576-747 (AVPRKSSYAL…YDHEQEWSGH (172 aa)) the chain is on the cytoplasmic side. Residues 593-713 (GQEHDHNGYQ…GTNDRGRTTF (121 aa)) form a disordered region. The segment covering 606-617 (DSTDEPSLRARA) has biased composition (basic and acidic residues). Over residues 643–661 (GTTNGLSTAPSVAAHSSQP) the composition is skewed to polar residues. The helical transmembrane segment at 748–768 (LPSWAWFFQFLLLGPFMIILA) threads the bilayer. The Vacuolar segment spans residues 769–789 (AQTGLMLTDAVYQTGSDGSKL). Residues 790 to 810 (ITPYLIIFVFTVLLILPLTPF) form a helical membrane-spanning segment. At 811 to 817 (IHRVTHH) the chain is on the cytoplasmic side. Residues 818–838 (IPVFLLVVFIVTLTYNLIAFP) traverse the membrane as a helical segment. The Vacuolar portion of the chain corresponds to 839–1072 (FSANNRYKTF…VEGRKAFKIV (234 aa)). 2 N-linked (GlcNAc...) asparagine glycosylation sites follow: Asn932 and Asn974.

The protein belongs to the peptidase M28 family. Zn(2+) serves as cofactor.

Its subcellular location is the vacuole membrane. May be involved in vacuolar sorting and osmoregulation. The chain is Vacuolar membrane protease from Neurospora crassa (strain ATCC 24698 / 74-OR23-1A / CBS 708.71 / DSM 1257 / FGSC 987).